Here is a 114-residue protein sequence, read N- to C-terminus: Fructose-bisphosphate aldolase 2 (114 aa).

Position 35 to 38 (35 to 38 (NIDT)) interacts with dihydroxyacetone phosphate.

This sequence belongs to the class II fructose-bisphosphate aldolase family. In terms of assembly, homodimer. Zn(2+) is required as a cofactor.

The catalysed reaction is beta-D-fructose 1,6-bisphosphate = D-glyceraldehyde 3-phosphate + dihydroxyacetone phosphate. It participates in carbohydrate biosynthesis; Calvin cycle. Its pathway is carbohydrate degradation; glycolysis; D-glyceraldehyde 3-phosphate and glycerone phosphate from D-glucose: step 4/4. Its function is as follows. Catalyzes the aldol condensation of dihydroxyacetone phosphate (DHAP or glycerone-phosphate) with glyceraldehyde 3-phosphate (G3P) to form fructose 1,6-bisphosphate (FBP) in gluconeogenesis and the reverse reaction in glycolysis. The polypeptide is Fructose-bisphosphate aldolase 2 (cbbA) (Rhodobacter capsulatus (Rhodopseudomonas capsulata)).